The following is a 420-amino-acid chain: Glucose-1-phosphate adenylyltransferase (420 aa).

Alpha-D-glucose 1-phosphate-binding positions include Y97, G162, 177 to 178, and S188; that span reads EK.

It belongs to the bacterial/plant glucose-1-phosphate adenylyltransferase family. In terms of assembly, homotetramer.

It catalyses the reaction alpha-D-glucose 1-phosphate + ATP + H(+) = ADP-alpha-D-glucose + diphosphate. It participates in glycan biosynthesis; glycogen biosynthesis. In terms of biological role, involved in the biosynthesis of ADP-glucose, a building block required for the elongation reactions to produce glycogen. Catalyzes the reaction between ATP and alpha-D-glucose 1-phosphate (G1P) to produce pyrophosphate and ADP-Glc. In Pseudothermotoga lettingae (strain ATCC BAA-301 / DSM 14385 / NBRC 107922 / TMO) (Thermotoga lettingae), this protein is Glucose-1-phosphate adenylyltransferase.